A 676-amino-acid polypeptide reads, in one-letter code: Envelope glycoprotein (676 aa).

Residues 1-32 (MGVTGILQLPRDRFKRTSFFLWVIILFQRTFS) form the signal peptide. At 33–650 (IPLGVIHNST…NDNWWTGWRQ (618 aa)) the chain is on the extracellular side. N-linked (GlcNAc...) asparagine; by host glycosylation is present at Asn-40. 5 disulfide bridges follow: Cys-53–Cys-609, Cys-108–Cys-135, Cys-121–Cys-147, Cys-511–Cys-556, and Cys-601–Cys-608. The tract at residues 54-201 (RDKLSSTNQL…DFFSSHPLRE (148 aa)) is receptor-binding. Asn-204, Asn-228, Asn-238, Asn-257, Asn-268, Asn-296, Asn-317, Asn-333, Asn-346, Asn-386, and Asn-413 each carry an N-linked (GlcNAc...) asparagine; by host glycan. The mucin-like region stretch occupies residues 305 to 485 (ELSFTVVSNG…SGKLGLITNT (181 aa)). The span at 315–335 (AKNISGQSPARTSSDPGTNTT) shows a compositional bias: polar residues. A disordered region spans residues 315–337 (AKNISGQSPARTSSDPGTNTTTE). The span at 373–391 (TSPQSLTTKPGPDNSTHNT) shows a compositional bias: polar residues. Disordered stretches follow at residues 373–392 (TSPQ…HNTP) and 402–479 (TQVE…SGKL). Residues 414–432 (DSTASDTPSATTAAGPPKA) are compositionally biased toward low complexity. A compositionally biased stretch (polar residues) spans 433 to 464 (ENTNTSKSTDFLDPATTTSPQNHSETAGNNNT). Residues Asn-436, Asn-454, and Asn-462 are each glycosylated (N-linked (GlcNAc...) asparagine; by host). Residues 524–539 (GAAIGLAWIPYFGPAA) are fusion peptide. A coiled-coil region spans residues 554 to 595 (LICGLRQLANETTQALQLFLRATTELRTFSILNRKAIDFLLQ). N-linked (GlcNAc...) asparagine; by host glycosylation is present at Asn-563. A coiled-coil region spans residues 615-634 (WTKNITDKIDQIIHDFVDKT). Asn-618 is a glycosylation site (N-linked (GlcNAc...) asparagine; by host). A helical membrane pass occupies residues 651-671 (WIPAGIGVTGVIIAVIALFCI). S-palmitoyl cysteine; by host attachment occurs at residues Cys-670 and Cys-672. The Cytoplasmic segment spans residues 672–676 (CKFVF).

The protein belongs to the filoviruses glycoprotein family. In terms of assembly, homotrimer; each monomer consists of a GP1 and a GP2 subunit linked by disulfide bonds. The resulting peplomers (GP1,2) protrude from the virus surface as spikes. Interacts with host integrin alpha-V/ITGAV. Interacts with host CLEC10A. Binds also to host CD209 and CLEC4M/DC-SIGN(R). Interacts with host FOLR1. Interacts with BST2; this interaction inhibits the antiviral effect of BST2 and this allows viral release from infected cells. Interacts with host FCN1; this interaction enhances viral entry. Interacts with host TLR4; this interaction induces cell death in T-lymphocytes or proinflammatory cytokines and SOCS1 production in monocytes. As to quaternary structure, interacts with host entry receptor NPC1. GP1 and GP2delta are part of GP1,2delta soluble complexes released by ectodomain shedding. Post-translationally, the signal peptide region modulates GP's high mannose glycosylation, thereby determining the efficiency of the interactions with DC-SIGN(R). N-glycosylated. In terms of processing, O-glycosylated in the mucin-like region. Post-translationally, palmitoylation of GP2 is not required for its function. Specific enzymatic cleavages in vivo yield mature proteins. The precursor is processed into GP1 and GP2 by host cell furin in the trans Golgi, and maybe by other host proteases, to yield the mature GP1 and GP2 proteins. The cleavage site corresponds to the furin optimal cleavage sequence [KR]-X-[KR]-R. This cleavage does not seem to be required for function. After the internalization of the virus into cell endosomes, GP1 C-terminus is removed by the endosomal proteases cathepsin B, cathepsin L, or both, leaving a 19-kDa N-terminal fragment which is further digested by cathepsin B. Proteolytic processing of GP1,2 by host ADAM17 can remove the transmembrane anchor of GP2 and leads to shedding of complexes consisting in GP1 and truncated GP2 (GP1,2delta).

The protein localises to the virion membrane. It localises to the host cell membrane. The protein resides in the secreted. Functionally, trimeric GP1,2 complexes form the virion surface spikes and mediate the viral entry processes, with GP1 acting as the receptor-binding subunit and GP2 as the membrane fusion subunit. At later times of infection, down-regulates the expression of various host cell surface molecules that are essential for immune surveillance and cell adhesion. Down-modulates several integrins including ITGA1, ITGA2, ITGA3, ITGA4, ITGA5, ITGA6, ITGAV and ITGB1. This decrease in cell adhesion molecules may lead to cell detachment, contributing to the disruption of blood vessel integrity and hemorrhages developed during infection (cytotoxicity). Interacts with host TLR4 and thereby stimulates the differentiation and activation of monocytes leading to bystander death of T-lymphocytes. Down-regulates as well the function of host natural killer cells. Counteracts the antiviral effect of host BST2/tetherin that restricts release of progeny virions from infected cells. However, cooperates with VP40 and host BST2 to activate canonical NF-kappa-B pathway in a manner dependent on neddylation. Its function is as follows. Functions as a decoy for anti-GP1,2 antibodies thereby contributing to viral immune evasion. Interacts and activates host macrophages and dendritic cells inducing up-regulation of cytokine transcription. This effect is mediated throught activation of host TLR4. In terms of biological role, responsible for binding to the receptor(s) on target cells. Interacts with CD209/DC-SIGN and CLEC4M/DC-SIGNR which act as cofactors for virus entry into dendritic cells (DCs) and endothelial cells. Binding to the macrophage specific lectin CLEC10A also seems to enhance virus infectivity. Interaction with FOLR1/folate receptor alpha may be a cofactor for virus entry in some cell types, although results are contradictory. Members of the Tyro3 receptor tyrosine kinase family also seem to be cell entry factors in filovirus infection. Once attached, the virions are internalized through clathrin-dependent endocytosis and/or macropinocytosis. After internalization of the virus into the endosomes of the host cell, proteolysis of GP1 by two cysteine proteases, CTSB/cathepsin B and CTSL/cathepsin L removes the glycan cap and allows GP1 binding to the host entry receptor NPC1. NPC1-binding, Ca(2+) and acidic pH induce a conformational change of GP2, which unmasks its fusion peptide and permit membranes fusion. Acts as a class I viral fusion protein. Under the current model, the protein has at least 3 conformational states: pre-fusion native state, pre-hairpin intermediate state, and post-fusion hairpin state. During viral and target cell membrane fusion, the coiled coil regions (heptad repeats) assume a trimer-of-hairpins structure, positioning the fusion peptide in close proximity to the C-terminal region of the ectodomain. The formation of this structure appears to drive apposition and subsequent fusion of viral and target cell membranes. Responsible for penetration of the virus into the cell cytoplasm by mediating the fusion of the membrane of the endocytosed virus particle with the endosomal membrane. Low pH in endosomes induces an irreversible conformational change in GP2, releasing the fusion hydrophobic peptide. The protein is Envelope glycoprotein (GP) of Epomops franqueti (Franquet's epauletted fruit bat).